Consider the following 365-residue polypeptide: Succinyl-diaminopimelate desuccinylase (365 aa).

Position 64 (His-64) interacts with Zn(2+). Asp-66 is a catalytic residue. Asp-95 lines the Zn(2+) pocket. Glu-125 functions as the Proton acceptor in the catalytic mechanism. Zn(2+) is bound by residues Glu-126, Glu-154, and His-339.

Belongs to the peptidase M20A family. DapE subfamily. Homodimer. Zn(2+) serves as cofactor. The cofactor is Co(2+).

It carries out the reaction N-succinyl-(2S,6S)-2,6-diaminopimelate + H2O = (2S,6S)-2,6-diaminopimelate + succinate. It functions in the pathway amino-acid biosynthesis; L-lysine biosynthesis via DAP pathway; LL-2,6-diaminopimelate from (S)-tetrahydrodipicolinate (succinylase route): step 3/3. Functionally, catalyzes the hydrolysis of N-succinyl-L,L-diaminopimelic acid (SDAP), forming succinate and LL-2,6-diaminopimelate (DAP), an intermediate involved in the bacterial biosynthesis of lysine and meso-diaminopimelic acid, an essential component of bacterial cell walls. The polypeptide is Succinyl-diaminopimelate desuccinylase (Sulfurimonas denitrificans (strain ATCC 33889 / DSM 1251) (Thiomicrospira denitrificans (strain ATCC 33889 / DSM 1251))).